Here is a 1207-residue protein sequence, read N- to C-terminus: DNA-directed RNA polymerase subunit beta' (1207 aa).

Positions 60, 62, 75, and 78 each coordinate Zn(2+). Residues aspartate 450, aspartate 452, and aspartate 454 each contribute to the Mg(2+) site. Residues cysteine 818, cysteine 892, cysteine 899, and cysteine 902 each coordinate Zn(2+).

The protein belongs to the RNA polymerase beta' chain family. In terms of assembly, the RNAP catalytic core consists of 2 alpha, 1 beta, 1 beta' and 1 omega subunit. When a sigma factor is associated with the core the holoenzyme is formed, which can initiate transcription. Mg(2+) is required as a cofactor. Requires Zn(2+) as cofactor.

The catalysed reaction is RNA(n) + a ribonucleoside 5'-triphosphate = RNA(n+1) + diphosphate. In terms of biological role, DNA-dependent RNA polymerase catalyzes the transcription of DNA into RNA using the four ribonucleoside triphosphates as substrates. The sequence is that of DNA-directed RNA polymerase subunit beta' from Lactococcus lactis subsp. cremoris (strain MG1363).